A 950-amino-acid polypeptide reads, in one-letter code: UvrABC system protein A (950 aa).

36–43 (GKSGSGKS) serves as a coordination point for ATP. Residues 260-287 (CPLCGFSLPLIEPRLFSFNSPFGACSEC) form a C4-type zinc finger. ABC transporter domains follow at residues 317–599 (FKTS…KNSL) and 619–947 (ADKG…MFLK). Residue 651 to 658 (GVSGSGKS) participates in ATP binding. The segment at 750–776 (CEKCQGDGYLNIQMHFLPDVFVPCDLC) adopts a C4-type zinc-finger fold.

This sequence belongs to the ABC transporter superfamily. UvrA family. In terms of assembly, forms a heterotetramer with UvrB during the search for lesions.

Its subcellular location is the cytoplasm. Its function is as follows. The UvrABC repair system catalyzes the recognition and processing of DNA lesions. UvrA is an ATPase and a DNA-binding protein. A damage recognition complex composed of 2 UvrA and 2 UvrB subunits scans DNA for abnormalities. When the presence of a lesion has been verified by UvrB, the UvrA molecules dissociate. The polypeptide is UvrABC system protein A (Borreliella burgdorferi (strain ATCC 35210 / DSM 4680 / CIP 102532 / B31) (Borrelia burgdorferi)).